The following is a 75-amino-acid chain: UPF0512 protein D (75 aa).

Positions 1–20 are disordered; sequence MAIFKSISSISNSTGSMGSS.

It belongs to the UPF0512 family.

This Dictyostelium discoideum (Social amoeba) protein is UPF0512 protein D.